The following is a 244-amino-acid chain: Lipoprotein-releasing system ATP-binding protein LolD (244 aa).

The ABC transporter domain maps to 19-244 (IRAEALAKTY…KLRELAPSAV (226 aa)). 55–62 (GASGAGKS) is an ATP binding site.

This sequence belongs to the ABC transporter superfamily. Lipoprotein translocase (TC 3.A.1.125) family. The complex is composed of two ATP-binding proteins (LolD) and two transmembrane proteins (LolC and LolE).

It localises to the cell inner membrane. In terms of biological role, part of the ABC transporter complex LolCDE involved in the translocation of mature outer membrane-directed lipoproteins, from the inner membrane to the periplasmic chaperone, LolA. Responsible for the formation of the LolA-lipoprotein complex in an ATP-dependent manner. The sequence is that of Lipoprotein-releasing system ATP-binding protein LolD from Xanthomonas euvesicatoria pv. vesicatoria (strain 85-10) (Xanthomonas campestris pv. vesicatoria).